The following is a 573-amino-acid chain: Multidrug and toxin extrusion protein 2 (573 aa).

Topologically, residues 1–46 (MEPAEDSLGATIQPPELVRVPRGRSLRILLGLRGALSPDVRREAAA) are cytoplasmic. A helical transmembrane segment spans residues 47-67 (LVALAGPVFLAQLMIFLISIV). Over 68–81 (SSIFCGHLGKVELD) the chain is Extracellular. A helical transmembrane segment spans residues 82 to 102 (AVTLAVSVVNVTGISVGTGLA). Topologically, residues 103–122 (SACDTLMSQSFGGKNLKRVG) are cytoplasmic. The helical transmembrane segment at 123-143 (VILQRGILILLLCCFPCWAIF) threads the bilayer. Residues 144-161 (LNTERLLLLLRQDPDVAR) lie on the Extracellular side of the membrane. Residues 162-182 (LAQVYVMICIPALPAAFLFQL) traverse the membrane as a helical segment. At 183–196 (QTRYLQSQGIIMPQ) the chain is on the cytoplasmic side. The helical transmembrane segment at 197-217 (VIVGIAANVVNVGMNAFLLYA) threads the bilayer. The Extracellular segment spans residues 218-225 (LDLGVVGS). The chain crosses the membrane as a helical span at residues 226-246 (AWANTTSQFFLSALLFLYVWW). The Cytoplasmic portion of the chain corresponds to 247-266 (KRIHIHTWGGWTRECFQEWS). A helical transmembrane segment spans residues 267 to 286 (SYTRLAIPSMFMVCIEWWTF). Residues 287–304 (EIGTFLAGLVNVTELGAQ) lie on the Extracellular side of the membrane. Residues 305–325 (AVIYELASVAYMVPFGFGVAA) traverse the membrane as a helical segment. The Cytoplasmic portion of the chain corresponds to 326-345 (SVRVGNALGAGNADQARCSC). A helical membrane pass occupies residues 346-366 (TTVLLCAGVCALLVGILLAAL). Residues 367 to 379 (KDVVAYIFTNDKD) lie on the Extracellular side of the membrane. The helical transmembrane segment at 380-400 (IISLVSQVMPIFAPFHLFDAL) threads the bilayer. Topologically, residues 401 to 415 (AGTCGGVLRGTGKQK) are cytoplasmic. Residues 416 to 436 (IGAVLNTIGYYGFGFPIGVSL) form a helical membrane-spanning segment. Topologically, residues 437-443 (MFAAKLG) are extracellular. Residues 444–464 (IIGLWAGLIVCVSFQAFSYLI) form a helical membrane-spanning segment. The Cytoplasmic segment spans residues 465–545 (YILRTNWSRV…VGEVLTGRQL (81 aa)). Residues 546 to 566 (VFYRGMALTVSVAVLIAGIVV) form a helical membrane-spanning segment. Residues 567-573 (RVFNDRG) lie on the Extracellular side of the membrane.

This sequence belongs to the multi antimicrobial extrusion (MATE) (TC 2.A.66.1) family. In terms of tissue distribution, expressed in testis; especially in testicular Leydig cells.

Its subcellular location is the cell membrane. In terms of biological role, multidrug efflux pump that functions as a H(+)/organic cation antiporter. May mediate testosterone efflux from the Leydig cells in the testes. This Mus musculus (Mouse) protein is Multidrug and toxin extrusion protein 2 (Slc47a2).